Consider the following 551-residue polypeptide: Calnexin homolog (551 aa).

The first 26 residues, 1 to 26 (MVDRKEIPLAMGLLAVLLFFVASSSS), serve as a signal peptide directing secretion. At 27-480 (FHLVRASDEV…EKGEKQPNLT (454 aa)) the chain is on the lumenal side. Positions 44 and 75 each coordinate Ca(2+). Cysteines 118 and 153 form a disulfide. An alpha-D-glucoside is bound by residues tyrosine 122 and lysine 124. The N-linked (GlcNAc...) asparagine glycan is linked to asparagine 140. Tyrosine 144 and aspartate 151 together coordinate an alpha-D-glucoside. Residues 226–330 (ALIPSKTIPD…CGEWKRPTKS (105 aa)) are disordered. A p domain (Extended arm) region spans residues 233–364 (IPDPDDKKPE…QEIPNPEYFE (132 aa)). Basic and acidic residues-rich tracts occupy residues 234–269 (PDPD…PREI) and 276–295 (KPEP…AKPE). Tandem repeats lie at residues 235-246 (DPDDKKPEDWDE), 252-263 (DPEAVKPEDWDE), 271-282 (DEEAEKPEPWLD), 289-299 (DPEAKPEDWDD), and 303-313 (GEWEAPKIENP). 2 4 X approximate repeats regions span residues 235–299 (DPDD…DWDD) and 303–360 (GEWE…IPNP). Acidic residues predominate over residues 296-305 (DWDDEEDGEW). Cysteine 315 and cysteine 321 are disulfide-bonded. 3 repeat units span residues 322 to 332 (GEWKRPTKSNP), 336 to 346 (GKWSAPYIDNP), and 350 to 360 (GIWKPQEIPNP). An an alpha-D-glucoside-binding site is contributed by glutamate 379. A Ca(2+)-binding site is contributed by aspartate 390. The N-linked (GlcNAc...) asparagine glycan is linked to asparagine 478. A helical transmembrane segment spans residues 481–501 (IGIIVSVVIVFVSIFFRLIFG). The Cytoplasmic segment spans residues 502–551 (GKKPANVEANVEKKKTNTETTSKQDGGEKEDNKEKEETANPPRRRPKRDN). The tract at residues 510–551 (ANVEKKKTNTETTSKQDGGEKEDNKEKEETANPPRRRPKRDN) is disordered. Residues 526–539 (DGGEKEDNKEKEET) are compositionally biased toward basic and acidic residues.

This sequence belongs to the calreticulin family. In vegetative and flowering tissues.

It is found in the endoplasmic reticulum membrane. Functionally, calcium-binding protein that interacts with newly synthesized monoglucosylated glycoproteins in the endoplasmic reticulum. It may act in assisting protein assembly and/or in the retention within the ER of unassembled protein subunits. It seems to play a major role in the quality control apparatus of the ER by the retention of incorrectly folded proteins. The polypeptide is Calnexin homolog (Pisum sativum (Garden pea)).